The sequence spans 28 residues: leu operon leader peptide (28 aa).

In terms of biological role, involved in control of the biosynthesis of leucine. This is leu operon leader peptide (leuL) from Salmonella typhi.